Consider the following 219-residue polypeptide: MAILYALVARGTVVLSEFTATSTNASTIAKQILEKVPGDNDSNVSYSQDRYVFHVKRTDGLTVLCMAEETAGRRIPFAFLEDIHQRFVRTYGRAVHTALAYAMNEEFSRVLSQQIDYYSNDPNADRINRIKGEMNQVRGVMIENIDKVLDRGERLELLVDKTANMQGNTFRFRKQARRFRSNVWWRNCKLTVLLILLLLVIIYIAVAFLCHGPTLPSCI.

Position 2 is an N-acetylalanine (Ala2). Topologically, residues 2–189 are cytoplasmic; sequence AILYALVARG…RSNVWWRNCK (188 aa). The region spanning 7–111 is the Longin domain; it reads LVARGTVVLS…AMNEEFSRVL (105 aa). The v-SNARE coiled-coil homology domain maps to 126-186; that stretch reads RINRIKGEMN…RRFRSNVWWR (61 aa). A helical; Anchor for type IV membrane protein membrane pass occupies residues 190–210; that stretch reads LTVLLILLLLVIIYIAVAFLC. The Vesicular segment spans residues 211-219; it reads HGPTLPSCI.

This sequence belongs to the synaptobrevin family. As to expression, expressed in flowers, leaves, stems and roots.

Its subcellular location is the vacuole membrane. It localises to the prevacuolar compartment membrane. Its function is as follows. Involved in the targeting and/or fusion of transport vesicles to their target membrane. The polypeptide is Vesicle-associated membrane protein 711 (Arabidopsis thaliana (Mouse-ear cress)).